The sequence spans 395 residues: Serine/threonine-protein kinase BIK1 (395 aa).

Residue Gly-2 is the site of N-myristoyl glycine attachment. Cys-4 carries the S-palmitoyl cysteine lipid modification. Ser-26 is subject to Phosphoserine. A Glycyl lysine isopeptide (Lys-Gly) (interchain with G-Cter in ubiquitin) cross-link involves residue Lys-31. Residues Ser-32, Ser-33, and Ser-34 each carry the phosphoserine modification. Thr-35 carries the post-translational modification Phosphothreonine. Lys-41 is covalently cross-linked (Glycyl lysine isopeptide (Lys-Gly) (interchain with G-Cter in ubiquitin)). Position 42 is a phosphothreonine (Thr-42). Ser-48 is subject to Phosphoserine; by autocatalysis and BAK1. Thr-50 is modified (phosphothreonine). Ser-54 carries the post-translational modification Phosphoserine; by autocatalysis. The residue at position 56 (Thr-56) is a Phosphothreonine; by autocatalysis. Thr-64 carries the post-translational modification Phosphothreonine. A Protein kinase domain is found at 67-356 (FRPDSVIGEG…RALQQLQDNL (290 aa)). Ser-71 is subject to Phosphoserine; by autocatalysis and BAK1. ATP is bound at residue 73–81 (IGEGGFGCV). Position 89 is a phosphoserine; by EFR (Ser-89). The Required for physical interaction with and phosphorylation of downstream signaling proteins (e.g. WRKY33, WRKY50, WRKY51 and WRKY57) to activate EFR-mediated immune signaling signature appears at 89–90 (ST). The residue at position 90 (Thr-90) is a Phosphothreonine; by EFR. Lys-95 is covalently cross-linked (Glycyl lysine isopeptide (Lys-Gly) (interchain with G-Cter in ubiquitin)). Lys-105 provides a ligand contact to ATP. Thr-120 bears the Phosphothreonine; by EFR mark. Ser-129 is modified (phosphoserine; by autocatalysis). Phosphoserine; by EFR is present on Ser-129. At Tyr-150 the chain carries Phosphotyrosine. Tyr-168 carries the post-translational modification Phosphotyrosine; by autocatalysis. Glycyl lysine isopeptide (Lys-Gly) (interchain with G-Cter in ubiquitin) cross-links involve residues Lys-170 and Lys-186. Ser-193 is subject to Phosphoserine. Asp-202 serves as the catalytic Proton acceptor. A Phosphoserine; by autocatalysis and BAK1 modification is found at Ser-206. Tyr-214 carries the phosphotyrosine; by autocatalysis modification. Ser-219 is modified (phosphoserine). A Phosphoserine; by autocatalysis modification is found at Ser-233. Ser-236 is subject to O-UMP-serine; by Xanthomonas campestris effector XopAC/AvrAC; alternate. The residue at position 236 (Ser-236) is a Phosphoserine; by autocatalysis and BAK1; alternate. O-UMP-threonine; by Xanthomonas campestris effector XopAC/AvrAC; alternate is present on Thr-237. Thr-237 bears the Phosphothreonine; by autocatalysis and BAK1; alternate mark. Position 242 is a phosphothreonine; by autocatalysis and BAK1 (Thr-242). A Phosphotyrosine modification is found at Tyr-243. Tyr-250 carries the post-translational modification Phosphotyrosine; by autocatalysis. 2 positions are modified to phosphoserine; by autocatalysis: Ser-252 and Ser-253. Residue Lys-286 forms a Glycyl lysine isopeptide (Lys-Gly) (interchain with G-Cter in ubiquitin) linkage. Position 314 is a phosphothreonine; by autocatalysis (Thr-314). A Glycyl lysine isopeptide (Lys-Gly) (interchain with G-Cter in ubiquitin) cross-link involves residue Lys-337. The residue at position 341 (Thr-341) is a Phosphothreonine. Residues 354–365 (DNLGKPSQTNPV) are compositionally biased toward polar residues. The segment at 354–395 (DNLGKPSQTNPVKDTKKLGFKTGTTKSSEKRFTQKPFGRHLV) is disordered. Lys-358 participates in a covalent cross-link: Glycyl lysine isopeptide (Lys-Gly) (interchain with G-Cter in ubiquitin). Ser-360 carries the post-translational modification Phosphoserine; by autocatalysis and BAK1. Thr-362 bears the Phosphothreonine; by autocatalysis and BAK1 mark. Lys-366 participates in a covalent cross-link: Glycyl lysine isopeptide (Lys-Gly) (interchain with G-Cter in ubiquitin). At Thr-368 the chain carries Phosphothreonine; by autocatalysis and BAK1. Thr-375 and Thr-377 each carry phosphothreonine.

The protein belongs to the protein kinase superfamily. Ser/Thr protein kinase family. Interacts with FLS2. Activation of FLS2 by flagellin (flg22) induces the dissociation of the complex. Interacts with BAK1. Interacts with the Xanthomonas campestris effector XopAC/AvrAC. Interacts with CPK28. Interacts with PEPR1. Interacts with PP2C38. Interacts with BRI1. Interacts with RBOHD. Binds to EFR when not phosphorylated at Ser-89 and Thr-90, in the absence of pathogen elicitor; dissociates upon pathogen-associated molecular pattern (PAMP)-triggered activation by EFR-mediated phosphorylation. Interacts directly with and phosphorylates WRKY transcription factors in the nucleus involved in the jasmonic acid (JA) and salicylic acid (SA) regulation (e.g. WRKY33, WRKY50, WRKY51 and WRKY57) to modulate defense hormones during plant immunity. Binds to ATL44/RHA3A and ATL45/RHA3B. Binds to SIK1 to be phosphorylated and stabilized. Post-translationally, phosphorylated by SIK1 to be stabilized. Phosphorylated by FLS2 and BAK1. Autophosphorylated. Autophosphorylation is reduced in presence of the Xanthomonas campestris effector XopAC/AvrAC. Phosphorylated, especially by EFR at Ser-89 and Thr-90, in response to the microbe-associated molecular pattern (MAMP) flg22. Phosphorylation in response to flg22 is abolished in presence of the Xanthomonas campestris effector XopAC/AvrAC. Phosphorylated at Ser-233, Ser-236 and Thr-237 by PEPR1. Phosphorylated at Tyr-150, Tyr-243 and Tyr-250. Tyrosine phosphorylation is required for BIK1 function in plant innate immunity. Uridylylated at Ser-236 and Thr-237 by the Xanthomonas campestris effector XopAC/AvrAC. This conceals conserved phosphorylation sites in the activation loop, reducing BIK1 kinase activity and consequently inhibiting downstream signaling. In terms of processing, monoubiquitinated by ATL44/RHA3A and ATL45/RHA3B following phosphorylation upon the recognition of microbe-associated molecular patterns (MAMPs, e.g. flg22) by pattern recognition receptors (PRRs), then released from the FLS2/BAK1 complex and internalized dynamically into endocytic compartments followed by the activation of immune signaling.

It is found in the cell membrane. Its subcellular location is the endosome membrane. The protein resides in the nucleus. It carries out the reaction L-seryl-[protein] + ATP = O-phospho-L-seryl-[protein] + ADP + H(+). The catalysed reaction is L-threonyl-[protein] + ATP = O-phospho-L-threonyl-[protein] + ADP + H(+). Its activity is regulated as follows. Kinase activation is repressed by the phosphatase PP2C38. Functionally, plays a central role in immune responses. Required to activate the resistance responses to necrotrophic pathogens, including the regulation of defense hormone expression (e.g. jasmonic acid (JA) and salicylic acid (SA)). Phosphorylates FLS2 and BAK1. Involved in pathogen-associated molecular pattern (PAMP)-triggered immunity (PTI) signaling, including calcium signaling, and defense responses downstream of FLS2; upon PAMP recognition, first phosphorylated by FLS2 and SIK1 prior to being monoubiquitinated by ATL44/RHA3A and ATL45/RHA3B at the plasma membrane, then internalized dynamically into endocytic compartments together with FLS2. Acts additively with PBL1 in PTI defenses. Acts as a positive regulator of the PAMP flg22-induced increase of cytosolic calcium. Upon flg22 perception, phosphorylates and activates the calcium-permeable channel OSCA1.3, promoting stomatal closure. Phosphorylates the NADPH oxidase RBOHD at specific sites in a calcium-independent manner to enhance reactive oxygen species (ROS) generation upon flg22 perception. ROS production in response to flg22 controls stomatal movement and restriction of bacterial entry into leaf tissues. Seems not required for flg22-induced MAPK activation. Required for Pep1-induced defenses. Pep1 is an endogenous elicitor that potentiates PAMP-inducible plant responses. In association with PEPR1, acts downstream of the canonical ethylene signaling cascade to regulate ethylene responses. Involved in ethylene signaling. Destabilizes EIN3, the key transcription activator in ethylene signaling, and represses EIN3-dependent transcription. Acts as a negative regulator in brassinosteroid (BR) signaling. Functions in BR signaling by direct interaction with the BR receptor BRI1 cytosolic kinase domain. Required during SCOOP small peptides (e.g. SCOOP10 and SCOOP12) perception and signaling; receptor-like cytosolic kinases (RLCK) activated by BAK1/SERK3 and SERK4 coreceptors when associated with MIK2 upon the perception of SCOOP peptides. In terms of biological role, (Microbial infection) Xanthomonas campestris effector AvrAC/XopAC-mediated uridylylation prevents activation by phosphorylation at the same residues, thus affecting immune responses and reducing defense responses toward X.campestris, mediating avrAC/XopAC virulence functions. This Arabidopsis thaliana (Mouse-ear cress) protein is Serine/threonine-protein kinase BIK1.